The sequence spans 154 residues: Putative pre-16S rRNA nuclease (154 aa).

This sequence belongs to the YqgF nuclease family.

It localises to the cytoplasm. In terms of biological role, could be a nuclease involved in processing of the 5'-end of pre-16S rRNA. The chain is Putative pre-16S rRNA nuclease from Rickettsia rickettsii (strain Iowa).